The chain runs to 120 residues: MLITVLKSKIHNARVTVCNVDYEGSLSLDEELIKQANLRPYEKVLVANVTNGERFETYIIPAPANSREVGLNGAAARSAVVGDRVIVMAFAMKEPDEEVDTTVLIMDEENNIKEVKKLKA.

S25 (schiff-base intermediate with substrate; via pyruvic acid) is an active-site residue. S25 is subject to Pyruvic acid (Ser). T57 contributes to the substrate binding site. The active-site Proton donor is Y58. 73 to 75 (GAA) is a substrate binding site.

The protein belongs to the PanD family. Heterooctamer of four alpha and four beta subunits. It depends on pyruvate as a cofactor. Is synthesized initially as an inactive proenzyme, which is activated by self-cleavage at a specific serine bond to produce a beta-subunit with a hydroxyl group at its C-terminus and an alpha-subunit with a pyruvoyl group at its N-terminus.

It localises to the cytoplasm. It catalyses the reaction L-aspartate + H(+) = beta-alanine + CO2. It participates in cofactor biosynthesis; (R)-pantothenate biosynthesis; beta-alanine from L-aspartate: step 1/1. Its function is as follows. Catalyzes the pyruvoyl-dependent decarboxylation of aspartate to produce beta-alanine. In Coprothermobacter proteolyticus (strain ATCC 35245 / DSM 5265 / OCM 4 / BT), this protein is Aspartate 1-decarboxylase.